The chain runs to 171 residues: MRILGIDPGLRLTGFGLIEQTGQKLAYVASGVVKSGEGSLPARLGILFGGINEVIATYRPDTCAVEIVFVNVNPQSTLLLGQARGAAICAAVSNDLTVAEYTALQIKQAVVGHGKAAKTQVQEMVKRLLALPIAPTADAADALACAITHAHGSRLGAQSTAGYRLKGGRLV.

Residues Asp-7, Glu-66, and Asp-138 contribute to the active site. Mg(2+) contacts are provided by Asp-7, Glu-66, and Asp-138.

This sequence belongs to the RuvC family. Homodimer which binds Holliday junction (HJ) DNA. The HJ becomes 2-fold symmetrical on binding to RuvC with unstacked arms; it has a different conformation from HJ DNA in complex with RuvA. In the full resolvosome a probable DNA-RuvA(4)-RuvB(12)-RuvC(2) complex forms which resolves the HJ. Mg(2+) is required as a cofactor.

The protein resides in the cytoplasm. The catalysed reaction is Endonucleolytic cleavage at a junction such as a reciprocal single-stranded crossover between two homologous DNA duplexes (Holliday junction).. Its function is as follows. The RuvA-RuvB-RuvC complex processes Holliday junction (HJ) DNA during genetic recombination and DNA repair. Endonuclease that resolves HJ intermediates. Cleaves cruciform DNA by making single-stranded nicks across the HJ at symmetrical positions within the homologous arms, yielding a 5'-phosphate and a 3'-hydroxyl group; requires a central core of homology in the junction. The consensus cleavage sequence is 5'-(A/T)TT(C/G)-3'. Cleavage occurs on the 3'-side of the TT dinucleotide at the point of strand exchange. HJ branch migration catalyzed by RuvA-RuvB allows RuvC to scan DNA until it finds its consensus sequence, where it cleaves and resolves the cruciform DNA. The protein is Crossover junction endodeoxyribonuclease RuvC of Thiobacillus denitrificans (strain ATCC 25259 / T1).